A 198-amino-acid chain; its full sequence is FMN-dependent NADH:quinone oxidoreductase (198 aa).

92–95 (MWNL) contributes to the FMN binding site.

The protein belongs to the azoreductase type 1 family. As to quaternary structure, homodimer. Requires FMN as cofactor.

It catalyses the reaction 2 a quinone + NADH + H(+) = 2 a 1,4-benzosemiquinone + NAD(+). It carries out the reaction N,N-dimethyl-1,4-phenylenediamine + anthranilate + 2 NAD(+) = 2-(4-dimethylaminophenyl)diazenylbenzoate + 2 NADH + 2 H(+). Functionally, quinone reductase that provides resistance to thiol-specific stress caused by electrophilic quinones. Also exhibits azoreductase activity. Catalyzes the reductive cleavage of the azo bond in aromatic azo compounds to the corresponding amines. The polypeptide is FMN-dependent NADH:quinone oxidoreductase (Clostridium beijerinckii (strain ATCC 51743 / NCIMB 8052) (Clostridium acetobutylicum)).